The following is a 684-amino-acid chain: NAD(P)H-quinone oxidoreductase subunit 5, chloroplastic (684 aa).

A run of 14 helical transmembrane segments spans residues 16–36 (WAFP…XLSI), 65–85 (IDPL…MVLI), 96–116 (GYLI…GLVT), 123–143 (IYIF…FWFT), 161–181 (GDFG…SFEF), 206–226 (AALL…HVWL), 234–254 (TPIS…FLVA), 256–276 (LLPL…IGII), 303–323 (LXYM…FHLI), 330–350 (ALLF…VGYS), 372–392 (TSFL…CFWS), 401–421 (WLYS…TAFY), 524–544 (LFPL…GIPF), and 583–603 (IFSV…YKPI).

The protein belongs to the complex I subunit 5 family. In terms of assembly, NDH is composed of at least 16 different subunits, 5 of which are encoded in the nucleus.

The protein resides in the plastid. Its subcellular location is the chloroplast thylakoid membrane. The catalysed reaction is a plastoquinone + NADH + (n+1) H(+)(in) = a plastoquinol + NAD(+) + n H(+)(out). The enzyme catalyses a plastoquinone + NADPH + (n+1) H(+)(in) = a plastoquinol + NADP(+) + n H(+)(out). NDH shuttles electrons from NAD(P)H:plastoquinone, via FMN and iron-sulfur (Fe-S) centers, to quinones in the photosynthetic chain and possibly in a chloroplast respiratory chain. The immediate electron acceptor for the enzyme in this species is believed to be plastoquinone. Couples the redox reaction to proton translocation, and thus conserves the redox energy in a proton gradient. The chain is NAD(P)H-quinone oxidoreductase subunit 5, chloroplastic (ndhF) from Sesamum indicum (Oriental sesame).